The sequence spans 292 residues: Probable alpha-L-glutamate ligase (292 aa).

One can recognise an ATP-grasp domain in the interval 104 to 287; sequence HQLLAAKGID…VATRIIEHVE (184 aa). ATP is bound by residues Lys-141, 178-179, Asp-187, and 211-213; these read EF and RSN. The Mg(2+) site is built by Asp-248, Glu-260, and Asn-262. Mn(2+)-binding residues include Asp-248, Glu-260, and Asn-262.

The protein belongs to the RimK family. The cofactor is Mg(2+). Mn(2+) serves as cofactor.

In Stenotrophomonas maltophilia (strain R551-3), this protein is Probable alpha-L-glutamate ligase.